We begin with the raw amino-acid sequence, 657 residues long: MKSPTKDSKLFHLKSNFAPTGDQPAAIAKLAEFQTNEQVLLGATGTGKTFTIANVIQKVQLPTVVIAHNKTLAGQLYQELKELFPNNAVEYFISYFDFYQPEAYLPAKGVYIEKSATVNEEIKRLRVSTLHSLSTRKDVIVVGSVASIYPTSSPADFAQYSLWLVVGKEYGLSELKTQLIHLNYVVNKQQLTPGKFRFQGDVVEVFPGYAQDYVLRLSFFDQQLEQIARIDPLTNKVLETLNSFKLGPADEYIVNQNDLGVALDTIKAELKDRLKYFERLNFPERAQRLQTITEHDLADLKAWGVCSGVENYARHLEHRPPHSKPYNIFDYFTKGEWLLVVDESHQTLPQIKGMYNTDISRKQSLIEYGFRLPSALDNRPLSYEEFRQGINKVIYVSATPREEEIQLSHNNVVEQLVRPTYLLDPEVIVKPKDNQVEDLVSEIINQRKHNGRTFVTVLTIKMAENLTDFLKERNIKVAYIHKDIKALERLILLTDLRKGEYECLVGINLLREGLDVPEVSLVAIFDADIPGLPRDERSLIQIIGRAARNVHGRVIMYANTISEQMDKAIKETQRRRTIQMAYNEQHHKTPMTVQKPITLNQPIKLKTKSSEQQKAALIKQLTKEMKQAAANQNYELAIEIRDSIFELEKQFRGKIKS.

One can recognise a Helicase ATP-binding domain in the interval 29-416; the sequence is KLAEFQTNEQ…LSHNNVVEQL (388 aa). 42-49 serves as a coordination point for ATP; that stretch reads GATGTGKT. Positions 95-118 match the Beta-hairpin motif; it reads YFDFYQPEAYLPAKGVYIEKSATV. One can recognise a Helicase C-terminal domain in the interval 435 to 597; sequence QVEDLVSEII…KTPMTVQKPI (163 aa). In terms of domain architecture, UVR spans 615-650; it reads AALIKQLTKEMKQAAANQNYELAIEIRDSIFELEKQ.

This sequence belongs to the UvrB family. In terms of assembly, forms a heterotetramer with UvrA during the search for lesions. Interacts with UvrC in an incision complex.

The protein resides in the cytoplasm. Functionally, the UvrABC repair system catalyzes the recognition and processing of DNA lesions. A damage recognition complex composed of 2 UvrA and 2 UvrB subunits scans DNA for abnormalities. Upon binding of the UvrA(2)B(2) complex to a putative damaged site, the DNA wraps around one UvrB monomer. DNA wrap is dependent on ATP binding by UvrB and probably causes local melting of the DNA helix, facilitating insertion of UvrB beta-hairpin between the DNA strands. Then UvrB probes one DNA strand for the presence of a lesion. If a lesion is found the UvrA subunits dissociate and the UvrB-DNA preincision complex is formed. This complex is subsequently bound by UvrC and the second UvrB is released. If no lesion is found, the DNA wraps around the other UvrB subunit that will check the other stand for damage. The protein is UvrABC system protein B of Mycoplasma pneumoniae (strain ATCC 29342 / M129 / Subtype 1) (Mycoplasmoides pneumoniae).